The following is a 434-amino-acid chain: Glutamyl-tRNA reductase (434 aa).

Residues 49 to 52 (TCNR), Ser-109, 114 to 116 (EPQ), and Gln-120 each bind substrate. Cys-50 acts as the Nucleophile in catalysis. 189 to 194 (GAGEMC) contacts NADP(+).

It belongs to the glutamyl-tRNA reductase family. As to quaternary structure, homodimer.

It carries out the reaction (S)-4-amino-5-oxopentanoate + tRNA(Glu) + NADP(+) = L-glutamyl-tRNA(Glu) + NADPH + H(+). The protein operates within porphyrin-containing compound metabolism; protoporphyrin-IX biosynthesis; 5-aminolevulinate from L-glutamyl-tRNA(Glu): step 1/2. Catalyzes the NADPH-dependent reduction of glutamyl-tRNA(Glu) to glutamate 1-semialdehyde (GSA). In Citrifermentans bemidjiense (strain ATCC BAA-1014 / DSM 16622 / JCM 12645 / Bem) (Geobacter bemidjiensis), this protein is Glutamyl-tRNA reductase.